Reading from the N-terminus, the 475-residue chain is uncharacterized protein (475 aa).

Residues E185–I244 are a coiled coil.

This is an uncharacterized protein from Nora virus.